Here is a 130-residue protein sequence, read N- to C-terminus: Small ribosomal subunit protein uS9 (130 aa).

Residues aspartate 107 to arginine 130 are disordered. The segment covering lysine 111–arginine 130 has biased composition (basic residues).

It belongs to the universal ribosomal protein uS9 family.

The sequence is that of Small ribosomal subunit protein uS9 from Ligilactobacillus salivarius (strain UCC118) (Lactobacillus salivarius).